The primary structure comprises 368 residues: Cobalt-precorrin-5B C(1)-methyltransferase (368 aa).

This sequence belongs to the CbiD family.

The catalysed reaction is Co-precorrin-5B + S-adenosyl-L-methionine = Co-precorrin-6A + S-adenosyl-L-homocysteine. It participates in cofactor biosynthesis; adenosylcobalamin biosynthesis; cob(II)yrinate a,c-diamide from sirohydrochlorin (anaerobic route): step 6/10. In terms of biological role, catalyzes the methylation of C-1 in cobalt-precorrin-5B to form cobalt-precorrin-6A. In Brucella ovis (strain ATCC 25840 / 63/290 / NCTC 10512), this protein is Cobalt-precorrin-5B C(1)-methyltransferase.